Consider the following 138-residue polypeptide: Glutaredoxin-C7 (138 aa).

Residues 17 to 40 (SSTRGGGGGGMLGLTLFDPPGGEQ) are disordered. The region spanning 42-137 (AERIGRLVRE…PRLREVGALC (96 aa)) is the Glutaredoxin domain. An intrachain disulfide couples C62 to C65.

The protein belongs to the glutaredoxin family. CC-type subfamily.

It localises to the cytoplasm. In terms of biological role, has a glutathione-disulfide oxidoreductase activity in the presence of NADPH and glutathione reductase. Reduces low molecular weight disulfides and proteins. The protein is Glutaredoxin-C7 (GRXC7) of Oryza sativa subsp. japonica (Rice).